The sequence spans 962 residues: Protease 3 (962 aa).

The first 23 residues, 1 to 23 (MPRSTWFKALLLLVALWAPLSQA), serve as a signal peptide directing secretion. Histidine 88 is a binding site for Zn(2+). Residue glutamate 91 is the Proton acceptor of the active site. Histidine 92 and glutamate 169 together coordinate Zn(2+).

This sequence belongs to the peptidase M16 family. Monomer. Zn(2+) is required as a cofactor.

It is found in the periplasm. It catalyses the reaction Preferential cleavage of 16-Tyr-|-Leu-17 and 25-Phe-|-Tyr-26 bonds of oxidized insulin B chain. Also acts on other substrates of Mw less than 7 kDa such as insulin and glucagon.. In terms of biological role, endopeptidase that degrades small peptides of less than 7 kDa, such as glucagon and insulin. In Escherichia coli (strain K12), this protein is Protease 3 (ptrA).